Here is an 82-residue protein sequence, read N- to C-terminus: Small ribosomal subunit protein bS16 (82 aa).

It belongs to the bacterial ribosomal protein bS16 family.

In Actinobacillus pleuropneumoniae serotype 5b (strain L20), this protein is Small ribosomal subunit protein bS16.